Here is a 227-residue protein sequence, read N- to C-terminus: Thiocyanate methyltransferase 1 (227 aa).

S-adenosyl-L-methionine is bound by residues Trp-36, Trp-40, Trp-47, and Gly-74. Phosphoserine is present on Ser-86. S-adenosyl-L-methionine contacts are provided by residues Asp-95, 123-124 (DV), and Tyr-139.

This sequence belongs to the class I-like SAM-binding methyltransferase superfamily. TPMT family. In terms of tissue distribution, expressed in shoots, leaves, stems, inflorescences, flowers and green siliques.

The catalysed reaction is thiocyanate + S-adenosyl-L-methionine = methyl thiocyanate + S-adenosyl-L-homocysteine. S-adenosyl-L-methionine-dependent methyltransferase. Involved in glucosinolate metabolism and defense against phytopathogens. Highly reactive to thiocyanate (NCS(-)) derived from myrosinase-mediated hydrolysis of glucosinolates upon tissue damage. The protein is Thiocyanate methyltransferase 1 of Arabidopsis thaliana (Mouse-ear cress).